We begin with the raw amino-acid sequence, 228 residues long: uncharacterized protein (228 aa).

S-adenosyl-L-methionine is bound by residues G179, I199, and L208.

This sequence belongs to the class IV-like SAM-binding methyltransferase superfamily. RNA methyltransferase TrmH family.

This is an uncharacterized protein from Borreliella burgdorferi (strain ATCC 35210 / DSM 4680 / CIP 102532 / B31) (Borrelia burgdorferi).